Consider the following 137-residue polypeptide: Large ribosomal subunit protein uL16 (137 aa).

It belongs to the universal ribosomal protein uL16 family. In terms of assembly, part of the 50S ribosomal subunit.

Binds 23S rRNA and is also seen to make contacts with the A and possibly P site tRNAs. This Spiroplasma kunkelii protein is Large ribosomal subunit protein uL16.